Here is a 325-residue protein sequence, read N- to C-terminus: LIM and senescent cell antigen-like-containing domain protein 1 (325 aa).

A2 is subject to N-acetylalanine. LIM zinc-binding domains lie at 10-62, 71-121, 135-184, 193-243, and 252-303; these read CERC…CEHD, CHQC…CRPC, CQKC…CLPC, CGAC…CETH, and CFHC…CKKC.

As to quaternary structure, component of the heterotrimeric IPP (ILK-PINCH-PARVIN) complex composed of ILK, LIMS1/PINCH and PARVA; the complex binds to F-actin via the C-terminal tail of LIMS1 and the N-terminal region of PARVA, promoting F-actin filament bundling. Formation of the IPP complex is dependent on protein kinase C and precedes integrin-mediated cell adhesion and spreading. Competes with LIMS2 for interaction with ILK. Interacts (via LIM zinc-binding 5) with TGFB1I1. Interacts with SH3/SH2 adapter NCK2, thereby linking the complex to cell surface receptors. In terms of tissue distribution, expressed in most tissues except in the brain.

The protein localises to the cell junction. It is found in the focal adhesion. Its subcellular location is the cell membrane. Its function is as follows. Within the IPP (ILK-PINCH-PARVIN) complex, binds to F-actin, promoting F-actin bundling, a process required to generate force for actin cytoskeleton reorganization and subsequent dynamic cell adhesion events such as cell spreading and migration. The protein is LIM and senescent cell antigen-like-containing domain protein 1 (LIMS1) of Homo sapiens (Human).